The chain runs to 301 residues: tRNA dimethylallyltransferase (301 aa).

10–17 (GATATGKT) lines the ATP pocket. A substrate-binding site is contributed by 12 to 17 (TATGKT). An interaction with substrate tRNA region spans residues 35–38 (DSRQ).

This sequence belongs to the IPP transferase family. As to quaternary structure, monomer. Mg(2+) serves as cofactor.

The enzyme catalyses adenosine(37) in tRNA + dimethylallyl diphosphate = N(6)-dimethylallyladenosine(37) in tRNA + diphosphate. In terms of biological role, catalyzes the transfer of a dimethylallyl group onto the adenine at position 37 in tRNAs that read codons beginning with uridine, leading to the formation of N6-(dimethylallyl)adenosine (i(6)A). In Crocosphaera subtropica (strain ATCC 51142 / BH68) (Cyanothece sp. (strain ATCC 51142)), this protein is tRNA dimethylallyltransferase.